A 42-amino-acid chain; its full sequence is Hemoglobin subunit beta-A (42 aa).

The Globin domain maps to 2 to 42; the sequence is EWTDAERSAILSLWGKIDTDELGPALLARLXLVXXXTQRYF.

Belongs to the globin family. As to quaternary structure, heterotetramer of two alpha chains and two beta chains. As to expression, red blood cells.

Involved in oxygen transport from gills to the various peripheral tissues. The polypeptide is Hemoglobin subunit beta-A (Catostomus clarkii (Desert sucker)).